Reading from the N-terminus, the 287-residue chain is Lipoyl synthase (287 aa).

7 residues coordinate [4Fe-4S] cluster: C34, C39, C45, C60, C64, C67, and S273. The Radical SAM core domain maps to 46–262 (WNKRHATVMI…KYIAYSKGFL (217 aa)).

This sequence belongs to the radical SAM superfamily. Lipoyl synthase family. [4Fe-4S] cluster is required as a cofactor.

The protein localises to the cytoplasm. It carries out the reaction [[Fe-S] cluster scaffold protein carrying a second [4Fe-4S](2+) cluster] + N(6)-octanoyl-L-lysyl-[protein] + 2 oxidized [2Fe-2S]-[ferredoxin] + 2 S-adenosyl-L-methionine + 4 H(+) = [[Fe-S] cluster scaffold protein] + N(6)-[(R)-dihydrolipoyl]-L-lysyl-[protein] + 4 Fe(3+) + 2 hydrogen sulfide + 2 5'-deoxyadenosine + 2 L-methionine + 2 reduced [2Fe-2S]-[ferredoxin]. It participates in protein modification; protein lipoylation via endogenous pathway; protein N(6)-(lipoyl)lysine from octanoyl-[acyl-carrier-protein]: step 2/2. Functionally, catalyzes the radical-mediated insertion of two sulfur atoms into the C-6 and C-8 positions of the octanoyl moiety bound to the lipoyl domains of lipoate-dependent enzymes, thereby converting the octanoylated domains into lipoylated derivatives. The chain is Lipoyl synthase from Wolbachia pipientis wMel.